A 268-amino-acid chain; its full sequence is Riboflavin transport system permease protein RibX (268 aa).

The next 6 membrane-spanning stretches (helical) occupy residues A24–L44, L76–L96, A119–S139, K140–I160, V185–A205, and L236–G256. The ABC transmembrane type-1 domain maps to T75 to A255.

This sequence belongs to the binding-protein-dependent transport system permease family. The complex is likely composed of an ATP-binding protein, a transmembrane protein (RibX) and a solute-binding protein (RibY).

It is found in the cell membrane. Functionally, part of an ABC transporter complex that transports riboflavin into the cell. In Chloroflexus aurantiacus (strain ATCC 29366 / DSM 635 / J-10-fl), this protein is Riboflavin transport system permease protein RibX.